Here is a 462-residue protein sequence, read N- to C-terminus: MVITIALIGRTNVGKSTLFNKLTGNRNDALASNHASLTRDRKHGFIIVNNTKIVLIDTPGINEDSKKKISLDKEIFEQVKFSIKQADLVCLVVSARNKLMHKDVEIIEMLRKFQKKIFLLVNKIEGLNFDLVKYEFYTLGLRNMHFISATNGIGIDFLTNNICSFFTSQKNSLYKKNKDFDIIYSITNDKKNCCQNLNKTIKIAIIGKPNVGKSTLINVLLNEKRVIVDSNPGTTRDSNWSLIIRNKINYMFFDTAGIRKKNKISTYIEKISVHKTLKILNLVHVVLLVIDAMDGFSDQDFYLLNLIIKNGCSVIIILNKNDKLSEKMRINVLNSKMLKLISHVKCHFISAKHNMGTSIIFKLINEAFFNSIKKIHTSKITEILKLAITKHQPPIYKRDRIKIKYAHIGKHNPLTIIIHGNKLEKLSNVYKKYLTNFFQSKLNLVGSSIVLYFKSSKNPFIK.

EngA-type G domains are found at residues 3 to 170 and 201 to 372; these read ITIA…TSQK and IKIA…FNSI. GTP is bound by residues 9 to 16, 57 to 61, 122 to 125, 207 to 214, 254 to 258, and 319 to 322; these read GRTNVGKS, DTPGI, NKIE, GKPNVGKS, DTAGI, and NKND. In terms of domain architecture, KH-like spans 373-457; sequence KKIHTSKITE…SIVLYFKSSK (85 aa).

The protein belongs to the TRAFAC class TrmE-Era-EngA-EngB-Septin-like GTPase superfamily. EngA (Der) GTPase family. In terms of assembly, associates with the 50S ribosomal subunit.

Functionally, GTPase that plays an essential role in the late steps of ribosome biogenesis. This chain is GTPase Der, found in Buchnera aphidicola subsp. Baizongia pistaciae (strain Bp).